The chain runs to 666 residues: MIHQKGYQFLQIGLASPKQIRKWAERILPNGDVVGEVKEPHTLHYRNQKPEKDGLFCEKIFGPIKSGRCACGKYERIPEQGEGKKFCKKCWVEFTYSRVRRYRMGYISLGCPVAHVWYLKSTPSHIANLLGQKLKDIESLAYYNHCLGNPSTNYPTLLFIKKYFQYSSLAWLLHILLCFFSFKGFEALEDREIATGGDAIKRLLSELDLQNTIDESRKACEELAYFDPLDEKEAQKAQREKERLVRRIKIASYFQETKIKPQWMVLSTIPVLPPDLRPMIHLNDGPLATSDLNDLYRKVLYRNKTLWELRQGIWPAPHSLMISQKRLVQEAVDALIDNGLGGPPMRDSNNRPYKSLSDVISGKQGRFRQNLLGKRVDYSGRSVIVVGPHLKIYQCGLPKNMAIELFQPFLIHYMINKKLASNLRVAKSIIQSKHPIVWFILKEVIKKHPVLLNRAPTLHRLGIQAFQPILVEGKAILLHPLVCAGFNADFDGDQMAVHVPLSPESQKEARLIMISNRNLLSPATGDPITLPSQDMLLGLYMLTLEDLQRNFSFSQKQCLKKHTNFNQMPSFISFEDVIKARVERKIHLYTSLWLKLKNIEAITSYLYQSPIEIQYNSRGTRSITYEDWNICENIEGEKISIYAYTTVGRVIFNQQFRSALQKRIDY.

Residues Cys-69, Cys-71, Cys-87, and Cys-90 each coordinate Zn(2+). Positions 489, 491, and 493 each coordinate Mg(2+).

Belongs to the RNA polymerase beta' chain family. RpoC1 subfamily. As to quaternary structure, in plastids the minimal PEP RNA polymerase catalytic core is composed of four subunits: alpha, beta, beta', and beta''. When a (nuclear-encoded) sigma factor is associated with the core the holoenzyme is formed, which can initiate transcription. Requires Mg(2+) as cofactor. Zn(2+) is required as a cofactor.

The protein resides in the plastid. It localises to the chloroplast. It carries out the reaction RNA(n) + a ribonucleoside 5'-triphosphate = RNA(n+1) + diphosphate. Its function is as follows. DNA-dependent RNA polymerase catalyzes the transcription of DNA into RNA using the four ribonucleoside triphosphates as substrates. The sequence is that of DNA-directed RNA polymerase subunit beta' from Chara vulgaris (Common stonewort).